The primary structure comprises 376 residues: Tetraacyldisaccharide 4'-kinase (376 aa).

Position 51–58 (51–58) interacts with ATP; that stretch reads AVGGTGKT.

It belongs to the LpxK family.

It carries out the reaction a lipid A disaccharide + ATP = a lipid IVA + ADP + H(+). It participates in glycolipid biosynthesis; lipid IV(A) biosynthesis; lipid IV(A) from (3R)-3-hydroxytetradecanoyl-[acyl-carrier-protein] and UDP-N-acetyl-alpha-D-glucosamine: step 6/6. Transfers the gamma-phosphate of ATP to the 4'-position of a tetraacyldisaccharide 1-phosphate intermediate (termed DS-1-P) to form tetraacyldisaccharide 1,4'-bis-phosphate (lipid IVA). This is Tetraacyldisaccharide 4'-kinase from Bacteroides fragilis (strain ATCC 25285 / DSM 2151 / CCUG 4856 / JCM 11019 / LMG 10263 / NCTC 9343 / Onslow / VPI 2553 / EN-2).